Reading from the N-terminus, the 556-residue chain is 2-succinyl-5-enolpyruvyl-6-hydroxy-3-cyclohexene-1-carboxylate synthase (556 aa).

The protein belongs to the TPP enzyme family. MenD subfamily. As to quaternary structure, homodimer. It depends on Mg(2+) as a cofactor. Mn(2+) serves as cofactor. Thiamine diphosphate is required as a cofactor.

The enzyme catalyses isochorismate + 2-oxoglutarate + H(+) = 5-enolpyruvoyl-6-hydroxy-2-succinyl-cyclohex-3-ene-1-carboxylate + CO2. The protein operates within quinol/quinone metabolism; 1,4-dihydroxy-2-naphthoate biosynthesis; 1,4-dihydroxy-2-naphthoate from chorismate: step 2/7. It participates in quinol/quinone metabolism; menaquinone biosynthesis. Catalyzes the thiamine diphosphate-dependent decarboxylation of 2-oxoglutarate and the subsequent addition of the resulting succinic semialdehyde-thiamine pyrophosphate anion to isochorismate to yield 2-succinyl-5-enolpyruvyl-6-hydroxy-3-cyclohexene-1-carboxylate (SEPHCHC). In Escherichia coli O127:H6 (strain E2348/69 / EPEC), this protein is 2-succinyl-5-enolpyruvyl-6-hydroxy-3-cyclohexene-1-carboxylate synthase.